We begin with the raw amino-acid sequence, 251 residues long: Small ribosomal subunit protein uS2 (251 aa).

It belongs to the universal ribosomal protein uS2 family.

The chain is Small ribosomal subunit protein uS2 from Chlorobium chlorochromatii (strain CaD3).